A 547-amino-acid polypeptide reads, in one-letter code: Chaperonin GroEL (547 aa).

ATP is bound by residues 30–33 (TLGP), Lys-51, 87–91 (DGTTT), Gly-415, and Asp-496. A disordered region spans residues 527–547 (SDKEEPMPMRGGMGGMGGMDF). Over residues 537-547 (GGMGGMGGMDF) the composition is skewed to gly residues.

This sequence belongs to the chaperonin (HSP60) family. As to quaternary structure, forms a cylinder of 14 subunits composed of two heptameric rings stacked back-to-back. Interacts with the co-chaperonin GroES.

The protein localises to the cytoplasm. It catalyses the reaction ATP + H2O + a folded polypeptide = ADP + phosphate + an unfolded polypeptide.. Together with its co-chaperonin GroES, plays an essential role in assisting protein folding. The GroEL-GroES system forms a nano-cage that allows encapsulation of the non-native substrate proteins and provides a physical environment optimized to promote and accelerate protein folding. This is Chaperonin GroEL from Rickettsia massiliae (strain Mtu5).